We begin with the raw amino-acid sequence, 112 residues long: Prothymosin alpha-B (112 aa).

The tract at residues 1 to 112 (MSDTAVDASV…TKKQKTDEDD (112 aa)) is disordered. The span at 9-35 (SVEKSTKDLKAKEKEVVEEAENGKDKP) shows a compositional bias: basic and acidic residues. Composition is skewed to acidic residues over residues 41 to 83 (ENEE…DEVE) and 92 to 101 (EDDEDDDDDV). A compositionally biased stretch (basic and acidic residues) spans 102–112 (ETKKQKTDEDD).

This sequence belongs to the pro/parathymosin family.

The protein resides in the nucleus. The chain is Prothymosin alpha-B (ptma-b) from Xenopus laevis (African clawed frog).